A 512-amino-acid chain; its full sequence is Glutamate--tRNA ligase (512 aa).

A 'HIGH' region motif is present at residues 11-21 (PSPTGALHIGG). The short motif at 263 to 267 (KLSKR) is the 'KMSKS' region element. Lys266 contributes to the ATP binding site.

It belongs to the class-I aminoacyl-tRNA synthetase family. Glutamate--tRNA ligase type 1 subfamily. Monomer.

Its subcellular location is the cytoplasm. The catalysed reaction is tRNA(Glu) + L-glutamate + ATP = L-glutamyl-tRNA(Glu) + AMP + diphosphate. Functionally, catalyzes the attachment of glutamate to tRNA(Glu) in a two-step reaction: glutamate is first activated by ATP to form Glu-AMP and then transferred to the acceptor end of tRNA(Glu). The protein is Glutamate--tRNA ligase of Amoebophilus asiaticus (strain 5a2).